A 453-amino-acid chain; its full sequence is MDGTIKEALSVVSDDQSLFDSAYGASSHLSKADMTASANPDYGQPHKINPIPPQQDWINQPMRVNIKREYEHMNGSRESPVDCSINKCSKLIGGSEGNAMTYTYMDEKNGPPPPNMTTNERRVIVPADPALWSQDHVRQWLEWAIKEYGLVEIDCSLFQNIDGKELCKMSKEDFLRSTSIYNTEVLLSHLNYLRDSSSSLGYNTQAHTDQSSRLTAKEDPSYEAVRRSGWGNSMSSPVTKSPPMGGTQNVNKSGDQQRSQPDPYQILGPTSSRLANPGSGQIQLWQFLLELLSDSSNASCITWEGTNGEFKMTDPDEVARRWGERKSKPNMNYDKLSRALRYYYDKSIMTKVHGKRYAYKFDFHGIAQALQPHPTDTSMYKYPSEFSYMPSYHSHQQKVNFVPSHPSSMPVTSSGFFGATSPYWNSPSANIYPNPNVPRHPNTHVQSHLGGFY.

Residues 111 to 197 (PPPPNMTTNE…SHLNYLRDSS (87 aa)) enclose the PNT domain. Polar residues predominate over residues 201–214 (GYNTQAHTDQSSRL). The segment at 201-273 (GYNTQAHTDQ…YQILGPTSSR (73 aa)) is disordered. A compositionally biased stretch (basic and acidic residues) spans 215 to 226 (TAKEDPSYEAVR). 2 stretches are compositionally biased toward polar residues: residues 230–239 (WGNSMSSPVT) and 246–273 (GTQNVNKSGDQQRSQPDPYQILGPTSSR). The ETS DNA-binding region spans 282–362 (IQLWQFLLEL…HGKRYAYKFD (81 aa)).

Belongs to the ETS family.

It localises to the nucleus. The sequence is that of Retroviral integration site protein Fli-1 homolog (fli1) from Xenopus laevis (African clawed frog).